A 154-amino-acid chain; its full sequence is Terephthalate 1,2-dioxygenase, terminal oxygenase component subunit beta 2 (154 aa).

Belongs to the bacterial ring-hydroxylating dioxygenase beta subunit family. In terms of assembly, heterotetramer composed of 2 alpha (TphA2I and TphA2II) and 2 beta (TphA3I and TphA3II) subunits. Part of a multicomponent enzyme system composed of a reductase (TphA1I or TphA1II) and a two-subunit oxygenase component (TphA2I or TphA2II and TphA3I or TphA3II). Requires Fe cation as cofactor.

The enzyme catalyses terephthalate + NADH + O2 + H(+) = (3S,4R)-3,4-dihydroxycyclohexa-1,5-diene-1,4-dicarboxylate + NAD(+). Its activity is regulated as follows. Inhibited by EDTA. In terms of biological role, component of the terephthalate 1,2-dioxygenase multicomponent enzyme system which catalyzes the dioxygenation of terephthalate (TER/TPA) to 1,2-dihydroxy-3,5-cyclohexadiene-1,4-dicarboxylic acid (DCD). It can also use 2,5-dicarboxypyridine (PDC) and 1,4-napthalenedicarboxylic acid (NDC) as substrates, and preferentially uses NADPH which is the physiological electron donor. The protein is Terephthalate 1,2-dioxygenase, terminal oxygenase component subunit beta 2 (tphA3II) of Comamonas sp.